A 393-amino-acid chain; its full sequence is NAD(P)H-quinone oxidoreductase subunit H, chloroplastic (393 aa).

It belongs to the complex I 49 kDa subunit family. NDH is composed of at least 16 different subunits, 5 of which are encoded in the nucleus.

Its subcellular location is the plastid. The protein resides in the chloroplast thylakoid membrane. The enzyme catalyses a plastoquinone + NADH + (n+1) H(+)(in) = a plastoquinol + NAD(+) + n H(+)(out). The catalysed reaction is a plastoquinone + NADPH + (n+1) H(+)(in) = a plastoquinol + NADP(+) + n H(+)(out). Functionally, NDH shuttles electrons from NAD(P)H:plastoquinone, via FMN and iron-sulfur (Fe-S) centers, to quinones in the photosynthetic chain and possibly in a chloroplast respiratory chain. The immediate electron acceptor for the enzyme in this species is believed to be plastoquinone. Couples the redox reaction to proton translocation, and thus conserves the redox energy in a proton gradient. The protein is NAD(P)H-quinone oxidoreductase subunit H, chloroplastic of Solanum tuberosum (Potato).